The sequence spans 930 residues: Pyruvate dehydrogenase E1 component (930 aa).

Positions 1–10 (MTTDFARHDL) are enriched in basic and acidic residues. Residues 1-21 (MTTDFARHDLAQNSNSASEPD) are disordered. Lys-375 participates in a covalent cross-link: Isoglutamyl lysine isopeptide (Lys-Gln) (interchain with Q-Cter in protein Pup).

Homodimer. Part of the PDH complex, consisting of multiple copies of AceE (E1), DlaT (E2) and Lpd (E3). It depends on Mg(2+) as a cofactor. Requires thiamine diphosphate as cofactor.

It catalyses the reaction N(6)-[(R)-lipoyl]-L-lysyl-[protein] + pyruvate + H(+) = N(6)-[(R)-S(8)-acetyldihydrolipoyl]-L-lysyl-[protein] + CO2. Its function is as follows. Component of the pyruvate dehydrogenase (PDH) complex, that catalyzes the overall conversion of pyruvate to acetyl-CoA and CO(2). AceE has reductase activity with pyruvate but does not react with 2-oxoglutarate. The polypeptide is Pyruvate dehydrogenase E1 component (aceE) (Mycobacterium tuberculosis (strain ATCC 25618 / H37Rv)).